We begin with the raw amino-acid sequence, 202 residues long: Na(+)-translocating NADH-quinone reductase subunit E (202 aa).

A run of 6 helical transmembrane segments spans residues 11-31 (AVFI…FLAV), 39-59 (FGLG…NNLI), 81-101 (FLKF…LEMA), 114-134 (GIFL…AFMV), 144-164 (VVFG…LAAV), and 180-200 (LGIT…FSGV).

The protein belongs to the NqrDE/RnfAE family. As to quaternary structure, composed of six subunits; NqrA, NqrB, NqrC, NqrD, NqrE and NqrF.

Its subcellular location is the cell inner membrane. It carries out the reaction a ubiquinone + n Na(+)(in) + NADH + H(+) = a ubiquinol + n Na(+)(out) + NAD(+). In terms of biological role, NQR complex catalyzes the reduction of ubiquinone-1 to ubiquinol by two successive reactions, coupled with the transport of Na(+) ions from the cytoplasm to the periplasm. NqrA to NqrE are probably involved in the second step, the conversion of ubisemiquinone to ubiquinol. In Idiomarina loihiensis (strain ATCC BAA-735 / DSM 15497 / L2-TR), this protein is Na(+)-translocating NADH-quinone reductase subunit E.